The sequence spans 302 residues: Porphobilinogen deaminase (302 aa).

C234 carries the post-translational modification S-(dipyrrolylmethanemethyl)cysteine.

Belongs to the HMBS family. As to quaternary structure, monomer. The cofactor is dipyrromethane.

The catalysed reaction is 4 porphobilinogen + H2O = hydroxymethylbilane + 4 NH4(+). It functions in the pathway porphyrin-containing compound metabolism; protoporphyrin-IX biosynthesis; coproporphyrinogen-III from 5-aminolevulinate: step 2/4. Its function is as follows. Tetrapolymerization of the monopyrrole PBG into the hydroxymethylbilane pre-uroporphyrinogen in several discrete steps. This is Porphobilinogen deaminase from Corynebacterium glutamicum (strain R).